A 415-amino-acid polypeptide reads, in one-letter code: Gamma-glutamyl phosphate reductase (415 aa).

It belongs to the gamma-glutamyl phosphate reductase family.

Its subcellular location is the cytoplasm. It catalyses the reaction L-glutamate 5-semialdehyde + phosphate + NADP(+) = L-glutamyl 5-phosphate + NADPH + H(+). It functions in the pathway amino-acid biosynthesis; L-proline biosynthesis; L-glutamate 5-semialdehyde from L-glutamate: step 2/2. Functionally, catalyzes the NADPH-dependent reduction of L-glutamate 5-phosphate into L-glutamate 5-semialdehyde and phosphate. The product spontaneously undergoes cyclization to form 1-pyrroline-5-carboxylate. The protein is Gamma-glutamyl phosphate reductase of Bacillus mycoides (strain KBAB4) (Bacillus weihenstephanensis).